The primary structure comprises 498 residues: MNFTVSFSTLMPLAPVMIVALTAVVVMLLISIKRNHNLIATTSVVGLNLAALYILLELFGGKFVPANVMGMFMVDPFTMFYQFMILVASLACCTLSHAYIETYKDNREELYLLLLASVAGAMLMVASSHYASFFISLELMSIPVYGLLAYTYQRSQSLEAGIKYLVLSATASAMLLMGMAYIYAYTGSLSFYDSVQALFGAIKQPMVLLGLALIIFAVAFKLSLAPFHKWTPDVYAGAPAPMATFLATAAKVATIGLFVRYLLASGAIMVNSLVTVLTIIAVLSILVGNLLAVRQVNLKRILGYSSIAHFGYLLIALISMTYASLGSVTVYVVTYVLTTIGAFGAVALMSSPYNNVDEAQSLADYRGLFWRRPVLTATLTVMMLSLAGIPLTAGFIGKFLVVMAAVTTQHWFLAAMIIVGSGIGLYYYLRVMVVMYMTPPETPRIDADAHWGQKVGGLMVLAAAALVIILGVYPDPMINLALKAEILSPLHFMLSQQQ.

14 helical membrane passes run 10–30 (LMPL…MLLI), 44–64 (VVGL…GKFV), 68–88 (VMGM…ILVA), 109–129 (ELYL…ASSH), 130–150 (YASF…LLAY), 164–184 (YLVL…YIYA), 207–227 (VLLG…LAPF), 239–259 (PAPM…GLFV), 273–293 (LVTV…LLAV), 301–321 (ILGY…ISMT), 328–348 (VTVY…AVAL), 377–397 (ATLT…GFIG), 412–434 (FLAA…VMVV), and 458–478 (LMVL…DPMI).

This sequence belongs to the complex I subunit 2 family. In terms of assembly, NDH-1 is composed of 14 different subunits. Subunits NuoA, H, J, K, L, M, N constitute the membrane sector of the complex.

It is found in the cell inner membrane. It catalyses the reaction a quinone + NADH + 5 H(+)(in) = a quinol + NAD(+) + 4 H(+)(out). NDH-1 shuttles electrons from NADH, via FMN and iron-sulfur (Fe-S) centers, to quinones in the respiratory chain. The immediate electron acceptor for the enzyme in this species is believed to be ubiquinone. Couples the redox reaction to proton translocation (for every two electrons transferred, four hydrogen ions are translocated across the cytoplasmic membrane), and thus conserves the redox energy in a proton gradient. This chain is NADH-quinone oxidoreductase subunit N, found in Acinetobacter baumannii (strain AB0057).